Consider the following 86-residue polypeptide: Large ribosomal subunit protein uL23 (86 aa).

It belongs to the universal ribosomal protein uL23 family. In terms of assembly, part of the 50S ribosomal subunit. Contacts protein L29.

Binds to 23S rRNA. One of the proteins that surrounds the polypeptide exit tunnel on the outside of the ribosome. The protein is Large ribosomal subunit protein uL23 of Methanosphaera stadtmanae (strain ATCC 43021 / DSM 3091 / JCM 11832 / MCB-3).